A 225-amino-acid chain; its full sequence is UPF0758 protein BAMEG_4721 (225 aa).

Residues 103 to 225 form the MPN domain; the sequence is SIRSPEDCAT…FVSLKEKGHI (123 aa). Positions 174, 176, and 187 each coordinate Zn(2+). The short motif at 174 to 187 is the JAMM motif element; sequence HNHPSGDPAPSRED.

Belongs to the UPF0758 family.

The protein is UPF0758 protein BAMEG_4721 of Bacillus anthracis (strain CDC 684 / NRRL 3495).